Reading from the N-terminus, the 426-residue chain is Histidinol dehydrogenase (426 aa).

Positions 125, 187, and 210 each coordinate NAD(+). 3 residues coordinate substrate: serine 233, glutamine 255, and histidine 258. Zn(2+)-binding residues include glutamine 255 and histidine 258. Residues glutamate 323 and histidine 324 each act as proton acceptor in the active site. Substrate contacts are provided by histidine 324, aspartate 357, glutamate 411, and histidine 416. Aspartate 357 is a Zn(2+) binding site. Histidine 416 is a Zn(2+) binding site.

It belongs to the histidinol dehydrogenase family. Zn(2+) serves as cofactor.

The catalysed reaction is L-histidinol + 2 NAD(+) + H2O = L-histidine + 2 NADH + 3 H(+). It participates in amino-acid biosynthesis; L-histidine biosynthesis; L-histidine from 5-phospho-alpha-D-ribose 1-diphosphate: step 9/9. Functionally, catalyzes the sequential NAD-dependent oxidations of L-histidinol to L-histidinaldehyde and then to L-histidine. This is Histidinol dehydrogenase (hisD) from Methanothermobacter thermautotrophicus (strain ATCC 29096 / DSM 1053 / JCM 10044 / NBRC 100330 / Delta H) (Methanobacterium thermoautotrophicum).